The primary structure comprises 166 residues: CDP-archaeol synthase (166 aa).

The next 4 helical transmembrane spans lie at 42 to 62, 73 to 93, 103 to 123, and 128 to 148; these read LVLG…VQDA, VLSV…KSFV, AAWP…LLLI, and FAAV…TPLL.

The protein belongs to the CDP-archaeol synthase family. It depends on Mg(2+) as a cofactor.

The protein resides in the cell membrane. The catalysed reaction is 2,3-bis-O-(geranylgeranyl)-sn-glycerol 1-phosphate + CTP + H(+) = CDP-2,3-bis-O-(geranylgeranyl)-sn-glycerol + diphosphate. The protein operates within membrane lipid metabolism; glycerophospholipid metabolism. In terms of biological role, catalyzes the formation of CDP-2,3-bis-(O-geranylgeranyl)-sn-glycerol (CDP-archaeol) from 2,3-bis-(O-geranylgeranyl)-sn-glycerol 1-phosphate (DGGGP) and CTP. This reaction is the third ether-bond-formation step in the biosynthesis of archaeal membrane lipids. The protein is CDP-archaeol synthase of Methanosphaerula palustris (strain ATCC BAA-1556 / DSM 19958 / E1-9c).